A 793-amino-acid polypeptide reads, in one-letter code: Translocase of chloroplast 90, chloroplastic (793 aa).

The tract at residues 22–59 (LGSDPFFRDPHQEQDNHSQAPAAPQPVTLSEPPCSTSS) is disordered. The span at 27-37 (FFRDPHQEQDN) shows a compositional bias: basic and acidic residues. Positions 130–157 (LIRAEESELKNVKLRQDRAKALAREQES) form a coiled coil. Positions 164-394 (DFSLRILVLG…FRDSIGLGQP (231 aa)) constitute an AIG1-type G domain. The tract at residues 173–180 (GKTGVGKS) is G1. GTP contacts are provided by residues 176–181 (GVGKSA) and 195–200 (DAFRPG). A Mg(2+)-binding site is contributed by serine 180. A homodimerization region spans residues 195 to 198 (DAFR). Residues 199-203 (PGTDR) form a G2 region. Positions 220–223 (DTPG) are G3. Positions 259–264 (RLDMID) are homodimerization. A helical transmembrane segment spans residues 279–297 (IFGAAIWLNTILVMTHSAA). The tract at residues 293–296 (THSA) is G4. Residues histidine 294 and 341–342 (EN) contribute to the GTP site. The G5 stretch occupies residues 341–343 (ENH). 2 coiled-coil regions span residues 410–442 (LRRR…YDQL) and 477–503 (KKQL…DTEQ).

Belongs to the TRAFAC class TrmE-Era-EngA-EngB-Septin-like GTPase superfamily. AIG1/Toc34/Toc159-like paraseptin GTPase family. TOC159 subfamily. As to quaternary structure, homodimer. Part of the TOC core complex that includes 1 protein for the specific recognition of transit peptides surrounded by a ring composed of four proteins forming translocation channels, and four to five GTP-binding proteins providing energy. This core complex can interact with components of the TIC complex to form a larger import complex. Chloroplastic protein precursor such as prSS (precursor of the RuBisCO small subunit) interacts with these complexes. The TOC complex contains a specific subset of polar lipids such as digalactosyldiacylglyceride (DGDG), phosphatidylcholine (PC) and phosphatidylglycerol (PG). Interacts with TOC33 and TOC75. Requires Mg(2+) as cofactor. As to expression, expressed in seedlings, leaves, flowers, and roots.

The protein resides in the plastid. Its subcellular location is the chloroplast outer membrane. The protein localises to the cytoplasm. Its function is as follows. GTPase involved in protein precursor import into chloroplasts. Seems to recognize chloroplast-destined precursor proteins and regulate their presentation to the translocation channel through GTP hydrolysis. Probably specialized in the import of nuclear encoded photosynthetic preproteins from the cytoplasm to the chloroplast. The sequence is that of Translocase of chloroplast 90, chloroplastic (TOC90) from Arabidopsis thaliana (Mouse-ear cress).